We begin with the raw amino-acid sequence, 253 residues long: LexA repressor (253 aa).

The disordered stretch occupies residues 1–33; it reads MTSQGRGTRRGGARGNVRAFPENPADAAGLTPR. The H-T-H motif DNA-binding region spans 54 to 74; the sequence is VREIGEAVGLTSTSSVAHQLK. Active-site for autocatalytic cleavage activity residues include Ser-177 and Lys-214.

It belongs to the peptidase S24 family. Homodimer.

The catalysed reaction is Hydrolysis of Ala-|-Gly bond in repressor LexA.. In terms of biological role, represses a number of genes involved in the response to DNA damage (SOS response), including recA and lexA. In the presence of single-stranded DNA, RecA interacts with LexA causing an autocatalytic cleavage which disrupts the DNA-binding part of LexA, leading to derepression of the SOS regulon and eventually DNA repair. The sequence is that of LexA repressor from Frankia alni (strain DSM 45986 / CECT 9034 / ACN14a).